Consider the following 175-residue polypeptide: Myosin regulatory light chain 2, atrial isoform (175 aa).

N-acetylalanine is present on Ala2. 2 positions are modified to phosphoserine: Ser22 and Ser23. EF-hand domains lie at 32–67 (AQIQ…LGKV), 102–137 (DPEE…QADK), and 138–173 (FSPA…GDEK). Residues Asp45, Asn47, Asp49, and Asp56 each contribute to the Ca(2+) site.

As to quaternary structure, myosin is a hexamer of 2 heavy chains and 4 light chains. Predominantly expressed in adult atrial muscle.

This is Myosin regulatory light chain 2, atrial isoform (MYL7) from Homo sapiens (Human).